Consider the following 136-residue polypeptide: Transmembrane protein 203 (136 aa).

The next 4 helical transmembrane spans lie at Phe14–Ala34, Phe50–Phe72, Val81–Leu101, and Leu112–Ala132.

It localises to the endoplasmic reticulum membrane. It is found in the endoplasmic reticulum-Golgi intermediate compartment. Functionally, involved in the regulation of cellular calcium homeotasis. May act as a regulator of STING-mediated inflammatory signaling in macrophages. The polypeptide is Transmembrane protein 203 (tmem203) (Xenopus laevis (African clawed frog)).